Reading from the N-terminus, the 397-residue chain is Ribosomal RNA large subunit methyltransferase I (397 aa).

Positions 2–79 (SASIYLVKGR…KEETVDLDFF (78 aa)) constitute a PUA domain.

This sequence belongs to the methyltransferase superfamily. RlmI family.

It localises to the cytoplasm. It carries out the reaction cytidine(1962) in 23S rRNA + S-adenosyl-L-methionine = 5-methylcytidine(1962) in 23S rRNA + S-adenosyl-L-homocysteine + H(+). Functionally, specifically methylates the cytosine at position 1962 (m5C1962) of 23S rRNA. This Aeromonas hydrophila subsp. hydrophila (strain ATCC 7966 / DSM 30187 / BCRC 13018 / CCUG 14551 / JCM 1027 / KCTC 2358 / NCIMB 9240 / NCTC 8049) protein is Ribosomal RNA large subunit methyltransferase I.